The chain runs to 341 residues: Anthranilate phosphoribosyltransferase (341 aa).

Residues Gly-82, 85–86, Thr-90, 92–95, 110–118, and Ser-122 contribute to the 5-phospho-alpha-D-ribose 1-diphosphate site; these read GD, NIST, and KHGGRSVSS. Gly-82 provides a ligand contact to anthranilate. A Mg(2+)-binding site is contributed by Ser-94. An anthranilate-binding site is contributed by Arg-168. Mg(2+) contacts are provided by Asp-227 and Glu-228.

It belongs to the anthranilate phosphoribosyltransferase family. Homodimer. Requires Mg(2+) as cofactor.

The catalysed reaction is N-(5-phospho-beta-D-ribosyl)anthranilate + diphosphate = 5-phospho-alpha-D-ribose 1-diphosphate + anthranilate. It participates in amino-acid biosynthesis; L-tryptophan biosynthesis; L-tryptophan from chorismate: step 2/5. Functionally, catalyzes the transfer of the phosphoribosyl group of 5-phosphorylribose-1-pyrophosphate (PRPP) to anthranilate to yield N-(5'-phosphoribosyl)-anthranilate (PRA). This is Anthranilate phosphoribosyltransferase from Nitrosomonas eutropha (strain DSM 101675 / C91 / Nm57).